The primary structure comprises 218 residues: Octanoyltransferase (218 aa).

A BPL/LPL catalytic domain is found at 45 to 218 (AGTADELWLL…TDALQRAIYS (174 aa)). Substrate is bound by residues 84-91 (RGGQITYH), 151-153 (ALG), and 164-166 (GLA). Residue cysteine 182 is the Acyl-thioester intermediate of the active site.

The protein belongs to the LipB family.

The protein localises to the cytoplasm. It catalyses the reaction octanoyl-[ACP] + L-lysyl-[protein] = N(6)-octanoyl-L-lysyl-[protein] + holo-[ACP] + H(+). It functions in the pathway protein modification; protein lipoylation via endogenous pathway; protein N(6)-(lipoyl)lysine from octanoyl-[acyl-carrier-protein]: step 1/2. Its function is as follows. Catalyzes the transfer of endogenously produced octanoic acid from octanoyl-acyl-carrier-protein onto the lipoyl domains of lipoate-dependent enzymes. Lipoyl-ACP can also act as a substrate although octanoyl-ACP is likely to be the physiological substrate. The polypeptide is Octanoyltransferase (Thiobacillus denitrificans (strain ATCC 25259 / T1)).